The chain runs to 433 residues: Isocitrate dehydrogenase [NADP], chloroplastic (433 aa).

The transit peptide at 1 to 21 directs the protein to the chloroplast; the sequence is QFSPNLSFSAFFPIITFTTAT. NADP(+)-binding positions include 98-100 and Arg105; that span reads TIT. Thr100 contacts substrate. Substrate contacts are provided by residues 117–123, Arg132, and Arg155; that span reads SPNGTIR. Asp275 lines the Mn(2+) pocket. Residue Lys283 coordinates NADP(+). Asp298 contacts Mn(2+). Residues 333–338 and Asn351 each bind NADP(+); that span reads GTVTRH.

The protein belongs to the isocitrate and isopropylmalate dehydrogenases family. Mg(2+) is required as a cofactor. It depends on Mn(2+) as a cofactor. As to expression, detected in all tissues examined.

The protein resides in the plastid. Its subcellular location is the chloroplast. It carries out the reaction D-threo-isocitrate + NADP(+) = 2-oxoglutarate + CO2 + NADPH. The protein is Isocitrate dehydrogenase [NADP], chloroplastic of Medicago sativa (Alfalfa).